The primary structure comprises 161 residues: Phosphopantetheine adenylyltransferase (161 aa).

S8 is a binding site for substrate. ATP contacts are provided by residues 8-9 (SF) and H16. Substrate is bound by residues 36–40 (ENPRK), L72, and R86. ATP is bound by residues 87-89 (GLR), E97, and 122-128 (FSFISSS). Residue E132 coordinates substrate.

Belongs to the bacterial CoaD family. In terms of assembly, homohexamer. Mg(2+) is required as a cofactor.

Its subcellular location is the cytoplasm. It catalyses the reaction (R)-4'-phosphopantetheine + ATP + H(+) = 3'-dephospho-CoA + diphosphate. Its pathway is cofactor biosynthesis; coenzyme A biosynthesis; CoA from (R)-pantothenate: step 4/5. Reversibly transfers an adenylyl group from ATP to 4'-phosphopantetheine, yielding dephospho-CoA (dPCoA) and pyrophosphate. In Thermotoga maritima (strain ATCC 43589 / DSM 3109 / JCM 10099 / NBRC 100826 / MSB8), this protein is Phosphopantetheine adenylyltransferase.